A 374-amino-acid chain; its full sequence is Putative G-protein coupled receptor-like protein B0244.6 (374 aa).

At 1-54 (MTQNHYTTSIFANCSKHYEFEILLETCTNSTNPCHAVSQIQSAITIAYVDYYTS) the chain is on the extracellular side. Residues 55 to 75 (VALFSIAALLDIYCLIITIPL) form a helical membrane-spanning segment. At 76–86 (YRRMKDDSKKK) the chain is on the cytoplasmic side. Residues 87–107 (YVFLITRCISGLLLVVAWLLI) form a helical membrane-spanning segment. Over 108–137 (QCIYLRFIAPSQDNLPYYVLALALNIGSTY) the chain is Extracellular. Residues 138 to 158 (VLLGSYVGMAGILYLGVLNPI) traverse the membrane as a helical segment. The Cytoplasmic portion of the chain corresponds to 159–169 (AFNQHLTLRIV). The chain crosses the membrane as a helical span at residues 170–190 (YIAVCIIFVISIFISIPLAIF). The Extracellular portion of the chain corresponds to 191–216 (QALMTVPTSSMSCTDTACAPLITLIN). Residues 217–237 (FVLVFGSLITTTLTLTFVLIS) form a helical membrane-spanning segment. Topologically, residues 238–262 (LCRHRKEFKKLDTTSNTSLNSAVRL) are cytoplasmic. Residues 263-283 (LKFTLFAVLLLVAAEVIPFVI) traverse the membrane as a helical segment. Residues 284 to 304 (SETKKKHSVVTGCYYFYHSGK) lie on the Extracellular side of the membrane. The chain crosses the membrane as a helical span at residues 305 to 325 (VIQYAVFALTESSIWSIALII). Over 326–374 (DPLINIIFDRTVSKKATDQVKWMRKSCVGLVRKVTKRSNPENFTETSEI) the chain is Cytoplasmic.

Belongs to the G-protein coupled receptor 1 family. B0244 subfamily.

Its subcellular location is the cell membrane. The sequence is that of Putative G-protein coupled receptor-like protein B0244.6 from Caenorhabditis elegans.